We begin with the raw amino-acid sequence, 66 residues long: Beta-mammal toxin Cv1 (66 aa).

The LCN-type CS-alpha/beta domain maps to 1–66 (KEGYIVNLST…VWPLPKKTCN (66 aa)). 4 cysteine pairs are disulfide-bonded: Cys12–Cys65, Cys16–Cys41, Cys25–Cys46, and Cys29–Cys48.

Expressed by the venom gland.

It localises to the secreted. With respect to regulation, is susceptible to be neutralized by human antibodies scFvs 10FG2 and HV. In terms of biological role, beta toxins bind voltage-independently at site-4 of sodium channels (Nav) and reduces peak current and shifts the voltage of activation toward more negative potentials thereby affecting sodium channel activation and promoting spontaneous and repetitive firing. This toxin is slightly toxic to mice. This chain is Beta-mammal toxin Cv1, found in Centruroides villegasi (Scorpion).